The following is a 470-amino-acid chain: TNF receptor-associated factor 4 (470 aa).

The RING-type zinc-finger motif lies at 18–58 (CPLCGKPMREPVQVSTCGHRFCDTCLQEFLSEGVFKCPEDQ). 3 TRAF-type zinc fingers span residues 101–154 (GHLN…EAYE), 155–208 (SHEG…DTIQ), and 209–267 (SHQY…LAMG). Residue Lys-263 forms a Glycyl lysine isopeptide (Lys-Gly) (interchain with G-Cter in ubiquitin) linkage. Residues 277-310 (HLAMMCALVSRQRQELQELRRELEELSIGSDGVL) adopt a coiled-coil conformation. The region spanning 307 to 462 (DGVLIWKIGS…DDAVFIRASV (156 aa)) is the MATH domain. Ser-426 is modified (phosphoserine).

Belongs to the TNF receptor-associated factor family. B subfamily. Homotrimer. Interacts with LTBR/TNFRSF3, NGFR/TNFRSF16, RPS6KB1 and TGFB1I1. Interacts with SMURF1. Interacts (via TRAF domain) with MAP3K4 (via kinase domain). Interacts with NCF1, TICAM1, IRAK1 and TRAF6, and is probably part of a complex containing TRAF4, NCF1, TICAM1, IRAK1 and TRAF6. Interacts (via MATH domain) with GP6 and GP1BB. Interacts with EGFR (via C-terminal region); this interaction promotes the formation of EGFR asymmetric dimers. Interacts with PKM; this interaction promotes PKM kinase activity. In terms of processing, polyubiquitinated, leading to its proteasomal degradation. Ubiquitinated at Lys-263 by the SCF(FBXL2) complex, leading to its degradation by the proteasome. In terms of tissue distribution, predominantly expressed in brain. Preferentially expressed by postmitotic undifferentiated neurons in developing central (CNS) and peripheral (PNS) nervous system, and in nervous tissues of sensory organs. In the embryo, protein expression was shown in brain, thymus, salivary glands and intestine. In the adult, protein expression is restricted to the brain (hippocampus and olfactory bulb).

It is found in the cytoplasm. Its subcellular location is the nucleus. It localises to the perinuclear region. The protein localises to the cell junction. The protein resides in the tight junction. It is found in the cell membrane. Its subcellular location is the cytoskeleton. It catalyses the reaction S-ubiquitinyl-[E2 ubiquitin-conjugating enzyme]-L-cysteine + [acceptor protein]-L-lysine = [E2 ubiquitin-conjugating enzyme]-L-cysteine + N(6)-ubiquitinyl-[acceptor protein]-L-lysine.. It functions in the pathway protein degradation; proteasomal ubiquitin-dependent pathway. Adapter protein with E3 ligase activity that is involved in many diverse biological processes including cell proliferation, migration, differentiation, DNA repair, platelet activation or apoptosis. Promotes EGFR-mediated signaling by facilitating the dimerization of EGFR and downstream AKT activation thereby promoting cell proliferation. Ubiquitinates SMURF2 through 'Lys-48'-linked ubiquitin chain leading to SMURF2 degradation through the proteasome and subsequently osteogenic differentiation. Promotes 'Lys-63'-mediated ubiquitination of CHK1 which in turn activates cell cycle arrest and activation of DNA repair. In addition, promotes an atypical 'Lys-29'-linked ubiquitination at the C-terminal end of IRS1 which is crucial for insulin-like growth factor (IGF) signal transduction. Regulates activation of NF-kappa-B in response to signaling through Toll-like receptors. Required for normal skeleton development, and for normal development of the respiratory tract. Required for activation of RPS6KB1 in response to TNF signaling. Modulates TRAF6 functions. Inhibits adipogenic differentiation by activating pyruvate kinase PKM activity and subsequently the beta-catenin signaling pathway. The sequence is that of TNF receptor-associated factor 4 (Traf4) from Mus musculus (Mouse).